A 150-amino-acid chain; its full sequence is Regulatory protein RecX (150 aa).

Belongs to the RecX family.

Its subcellular location is the cytoplasm. Functionally, modulates RecA activity. The chain is Regulatory protein RecX from Legionella pneumophila (strain Corby).